The sequence spans 335 residues: Transcription factor bHLH63 (335 aa).

Residues 110–160 are disordered; sequence MTMNRDDLVEEGEEEKSKITEQNNGSTKSIKKMKHKAKKEENNFSNDSSKV. One can recognise a bHLH domain in the interval 178–228; sequence QATDSHSIAERVRREKISERMKFLQDLVPGCDKITGKAGMLDEIINYVQSL.

In terms of assembly, homodimer. Interacts with IBH1. Binds reversibly to CRY2 after blue light illumination. As to expression, expressed constitutively in roots, leaves, and stems.

It localises to the nucleus. In terms of biological role, transcription factor that binds DNA to G box 5'-CACGTG-3' and, to a lower extent, to E-box 5'-CANNTG-3' in vitro. Binds to chromatin DNA of the FT gene and promotes its expression, and thus triggers flowering in response to blue light. The polypeptide is Transcription factor bHLH63 (BHLH63) (Arabidopsis thaliana (Mouse-ear cress)).